The sequence spans 666 residues: Probable cytochrome c oxidase subunit 1 (666 aa).

2 helical membrane-spanning segments follow: residues 16–36 and 57–77; these read IPLI…VWVV and IGVM…SDAI. A heme b-binding site is contributed by His105. 13 helical membrane passes run 108–128, 142–162, 192–212, 234–254, 277–297, 315–335, 346–366, 380–400, 413–433, 456–476, 493–513, 591–611, and 612–632; these read IMIF…VVPL, SVGF…LVIG, SLQI…TTVL, SNLL…MLLL, LIWA…FGIF, MVLA…HHFF, IFGI…YNWL, MLWA…GVLV, MFLV…GAFA, FWFT…AGML, WMLV…CQIM, SPTG…LIWH, and IWWM…VFAW. The Cu cation site is built by His283, Tyr287, His332, and His333. A cross-link (1'-histidyl-3'-tyrosine (His-Tyr)) is located at residues 283–287; the sequence is HPEVY. Positions 418 and 420 each coordinate heme b.

It belongs to the heme-copper respiratory oxidase family.

It is found in the cell membrane. The enzyme catalyses 4 Fe(II)-[cytochrome c] + O2 + 8 H(+)(in) = 4 Fe(III)-[cytochrome c] + 2 H2O + 4 H(+)(out). It participates in energy metabolism; oxidative phosphorylation. This chain is Probable cytochrome c oxidase subunit 1, found in Bradyrhizobium diazoefficiens (strain JCM 10833 / BCRC 13528 / IAM 13628 / NBRC 14792 / USDA 110).